The following is a 302-amino-acid chain: FeMo cofactor biosynthesis protein NifB (302 aa).

The 243-residue stretch at histidine 22–arginine 264 folds into the Radical SAM core domain. [4Fe-4S] cluster is bound by residues cysteine 36, cysteine 40, and cysteine 43. Residues glycine 91, threonine 142, and isoleucine 194 each coordinate S-adenosyl-L-methionine. Residues cysteine 260 and cysteine 263 each contribute to the [4Fe-4S] cluster site.

This sequence belongs to the radical SAM superfamily. NifB family. In terms of assembly, monomer. It depends on [4Fe-4S] cluster as a cofactor.

Its pathway is cofactor biosynthesis; Fe-Mo cofactor biosynthesis. Functionally, involved in the biosynthesis of the iron-molybdenum cofactor (FeMo-co or M-cluster) found in the dinitrogenase enzyme of the nitrogenase complex in nitrogen-fixing microorganisms. NifB catalyzes the crucial step of radical SAM-dependent carbide insertion that occurs concomitant with the insertion of a 9th sulfur and the rearrangement/coupling of two [4Fe-4S] clusters into a [8Fe-9S-C] cluster, the precursor to the M-cluster. This chain is FeMo cofactor biosynthesis protein NifB, found in Methanocaldococcus infernus (strain DSM 11812 / JCM 15783 / ME).